The sequence spans 146 residues: Hemoglobin subunit beta (146 aa).

Residue V1 is modified to N-acetylvaline. A Globin domain is found at 2–146; sequence HLTAEEKNAI…VANALAHKYH (145 aa). At T12 the chain carries Phosphothreonine. Position 59 is an N6-acetyllysine (K59). H63 contacts heme b. K82 is modified (N6-acetyllysine). Residue H92 coordinates heme b. C93 is subject to S-nitrosocysteine. N6-acetyllysine is present on K144.

This sequence belongs to the globin family. In terms of assembly, heterotetramer of two alpha chains and two beta chains. In terms of tissue distribution, red blood cells.

Involved in oxygen transport from the lung to the various peripheral tissues. The polypeptide is Hemoglobin subunit beta (HBB) (Osphranter rufus (Red kangaroo)).